The sequence spans 251 residues: MKIFYKAINMTLSMFTVIPLPKYEWDDRAAKHIMKLYPFIGLIIGILWYLSFFVLSKLNVPIMLMAALILTVPYILTGFLHLDGFMDVSDALLSRRDKETKLRILKDSTVGAFSVISVVLLLLVEFAGIFTVLNKNLDMRILIFIPIASRTMNGYFIVSQEMLGQSSLAKFFKEGTGKVDEIILLGIYVLVALITFFTLGINYLIAILAMGLISFILLLKVKKELGGINGDVAGYILVLMEFTGILLLGII.

6 consecutive transmembrane segments (helical) span residues 36-56 (LYPF…FVLS), 60-80 (VPIM…TGFL), 110-130 (VGAF…AGIF), 181-201 (EIIL…TLGI), 202-222 (NYLI…LKVK), and 231-251 (DVAG…LGII).

Belongs to the CobS family. Mg(2+) is required as a cofactor.

The protein localises to the cell membrane. It carries out the reaction alpha-ribazole + adenosylcob(III)inamide-GDP = adenosylcob(III)alamin + GMP + H(+). It catalyses the reaction alpha-ribazole 5'-phosphate + adenosylcob(III)inamide-GDP = adenosylcob(III)alamin 5'-phosphate + GMP + H(+). It participates in cofactor biosynthesis; adenosylcobalamin biosynthesis; adenosylcobalamin from cob(II)yrinate a,c-diamide: step 7/7. Joins adenosylcobinamide-GDP and alpha-ribazole to generate adenosylcobalamin (Ado-cobalamin). Also synthesizes adenosylcobalamin 5'-phosphate from adenosylcobinamide-GDP and alpha-ribazole 5'-phosphate. The protein is Adenosylcobinamide-GDP ribazoletransferase of Clostridium perfringens (strain SM101 / Type A).